Reading from the N-terminus, the 560-residue chain is Membrane protein insertase YidC (560 aa).

6 helical membrane passes run 5-25 (IINL…WQYF), 334-354 (AIDF…MNFF), 357-377 (YVGN…LLMF), 431-451 (LPIL…YVTI), 476-496 (LFGL…WPIL), and 522-542 (FMPL…LIYW).

The protein belongs to the OXA1/ALB3/YidC family. Type 1 subfamily. In terms of assembly, interacts with the Sec translocase complex via SecD. Specifically interacts with transmembrane segments of nascent integral membrane proteins during membrane integration.

It is found in the cell inner membrane. In terms of biological role, required for the insertion and/or proper folding and/or complex formation of integral membrane proteins into the membrane. Involved in integration of membrane proteins that insert both dependently and independently of the Sec translocase complex, as well as at least some lipoproteins. Aids folding of multispanning membrane proteins. The protein is Membrane protein insertase YidC of Rickettsia africae (strain ESF-5).